The sequence spans 377 residues: Chaperone protein DnaJ (377 aa).

In terms of domain architecture, J spans 8–73; it reads CYYETLEVER…DKRAAYDRFG (66 aa). The CR-type zinc-finger motif lies at 135–213; it reads GKTAQIEIPV…CSGQGRVTRE (79 aa). 8 residues coordinate Zn(2+): cysteine 148, cysteine 151, cysteine 165, cysteine 168, cysteine 187, cysteine 190, cysteine 201, and cysteine 204. CXXCXGXG motif repeat units lie at residues 148-155, 165-172, 187-194, and 201-208; these read CEACSGIG, CSTCGGAG, CPGCQGRG, and CPSCSGQG.

The protein belongs to the DnaJ family. As to quaternary structure, homodimer. Zn(2+) serves as cofactor.

The protein resides in the cytoplasm. Its function is as follows. Participates actively in the response to hyperosmotic and heat shock by preventing the aggregation of stress-denatured proteins and by disaggregating proteins, also in an autonomous, DnaK-independent fashion. Unfolded proteins bind initially to DnaJ; upon interaction with the DnaJ-bound protein, DnaK hydrolyzes its bound ATP, resulting in the formation of a stable complex. GrpE releases ADP from DnaK; ATP binding to DnaK triggers the release of the substrate protein, thus completing the reaction cycle. Several rounds of ATP-dependent interactions between DnaJ, DnaK and GrpE are required for fully efficient folding. Also involved, together with DnaK and GrpE, in the DNA replication of plasmids through activation of initiation proteins. In Bradyrhizobium diazoefficiens (strain JCM 10833 / BCRC 13528 / IAM 13628 / NBRC 14792 / USDA 110), this protein is Chaperone protein DnaJ.